Here is a 155-residue protein sequence, read N- to C-terminus: Ribosome maturation factor RimP (155 aa).

The protein belongs to the RimP family.

It localises to the cytoplasm. Required for maturation of 30S ribosomal subunits. This chain is Ribosome maturation factor RimP, found in Desulforapulum autotrophicum (strain ATCC 43914 / DSM 3382 / VKM B-1955 / HRM2) (Desulfobacterium autotrophicum).